The primary structure comprises 200 residues: Holliday junction branch migration complex subunit RuvA (200 aa).

The interval 1–63 is domain I; the sequence is MYAYVKGKLT…EDAQLLYGFS (63 aa). The tract at residues 64 to 142 is domain II; sequence SEEEKDMFLS…ITEEDSDSLL (79 aa). The tract at residues 143–149 is flexible linker; sequence QVDATST. The segment at 150–200 is domain III; sequence EQDQFVQEAMLALEALGYSKRELAKVEKTLNKNKYDSVDEAVKAGLQLVVS.

This sequence belongs to the RuvA family. As to quaternary structure, homotetramer. Forms an RuvA(8)-RuvB(12)-Holliday junction (HJ) complex. HJ DNA is sandwiched between 2 RuvA tetramers; dsDNA enters through RuvA and exits via RuvB. An RuvB hexamer assembles on each DNA strand where it exits the tetramer. Each RuvB hexamer is contacted by two RuvA subunits (via domain III) on 2 adjacent RuvB subunits; this complex drives branch migration. In the full resolvosome a probable DNA-RuvA(4)-RuvB(12)-RuvC(2) complex forms which resolves the HJ.

It is found in the cytoplasm. Its function is as follows. The RuvA-RuvB-RuvC complex processes Holliday junction (HJ) DNA during genetic recombination and DNA repair, while the RuvA-RuvB complex plays an important role in the rescue of blocked DNA replication forks via replication fork reversal (RFR). RuvA specifically binds to HJ cruciform DNA, conferring on it an open structure. The RuvB hexamer acts as an ATP-dependent pump, pulling dsDNA into and through the RuvAB complex. HJ branch migration allows RuvC to scan DNA until it finds its consensus sequence, where it cleaves and resolves the cruciform DNA. The chain is Holliday junction branch migration complex subunit RuvA from Staphylococcus aureus (strain MRSA252).